We begin with the raw amino-acid sequence, 97 residues long: Eotaxin (97 aa).

The first 23 residues, 1 to 23 (MQLSTALLFLLLTATSFTSQVLA), serve as a signal peptide directing secretion. Intrachain disulfides connect C32-C57 and C33-C73. O-linked (GalNAc...) threonine glycosylation occurs at T94.

Belongs to the intercrine beta (chemokine CC) family.

The protein resides in the secreted. In response to the presence of allergens, this protein directly promotes the accumulation of eosinophils (a prominent feature of allergic inflammatory reactions), but not lymphocytes, macrophages or neutrophils. Binds to CCR3. The polypeptide is Eotaxin (Ccl11) (Rattus norvegicus (Rat)).